Here is a 60-residue protein sequence, read N- to C-terminus: Beta-toxin BotIT2 (60 aa).

An LCN-type CS-alpha/beta domain is found at 1 to 60; sequence DGYIKGYKGCKITCVINDDYCDTECKAEGGTYGYCWKWGLACWCEDLPDEKRWKSETNTC. Intrachain disulfides connect C10/C60, C14/C35, C21/C42, and C25/C44.

Belongs to the long (4 C-C) scorpion toxin superfamily. Sodium channel inhibitor family. Beta subfamily. Expressed by the venom gland.

Its subcellular location is the secreted. Beta toxins bind voltage-independently at site-4 of sodium channels (Nav) and shift the voltage of activation toward more negative potentials thereby affecting sodium channel activation and promoting spontaneous and repetitive firing. This toxin specifically acts by inducing a new current with very slow activation/deactivation kinetics due to the transformation of normal fast channels into slow ones. It possess properties of excitatory and depressant toxins. It is highly active on insects and less active on mammals. This Buthus occitanus tunetanus (Common European scorpion) protein is Beta-toxin BotIT2.